The primary structure comprises 860 residues: Alanine--tRNA ligase (860 aa).

4 residues coordinate Zn(2+): His553, His557, Cys655, and His659.

Belongs to the class-II aminoacyl-tRNA synthetase family. Zn(2+) is required as a cofactor.

Its subcellular location is the cytoplasm. The enzyme catalyses tRNA(Ala) + L-alanine + ATP = L-alanyl-tRNA(Ala) + AMP + diphosphate. In terms of biological role, catalyzes the attachment of alanine to tRNA(Ala) in a two-step reaction: alanine is first activated by ATP to form Ala-AMP and then transferred to the acceptor end of tRNA(Ala). Also edits incorrectly charged Ser-tRNA(Ala) and Gly-tRNA(Ala) via its editing domain. This Legionella pneumophila (strain Corby) protein is Alanine--tRNA ligase.